Reading from the N-terminus, the 161-residue chain is Anthranilate 1,2-dioxygenase small subunit (161 aa).

It belongs to the bacterial ring-hydroxylating dioxygenase beta subunit family. In terms of assembly, part of a multicomponent enzyme system composed of a reductase (AndAa), a ferredoxin (AndAb) and a two-subunit oxygenase component (AndAc and AndAd).

The catalysed reaction is anthranilate + NADH + O2 + 3 H(+) = catechol + NH4(+) + CO2 + NAD(+). The enzyme catalyses anthranilate + NADPH + O2 + 3 H(+) = catechol + NH4(+) + CO2 + NADP(+). It functions in the pathway aromatic compound metabolism; anthranilate degradation via hydroxylation; catechol from anthranilate: step 1/1. Oxygenase component of anthranilate dioxygenase multicomponent enzyme system which catalyzes the incorporation of both atoms of molecular oxygen into anthranilate to form catechol. Can also act on benzoate and salicylate but not on 2-chlorobenzoate or o-toluate. This Burkholderia cepacia (Pseudomonas cepacia) protein is Anthranilate 1,2-dioxygenase small subunit.